Here is a 444-residue protein sequence, read N- to C-terminus: Acyl-CoA 6-desaturase (444 aa).

Over 1-130 the chain is Cytoplasmic; sequence MGKGGNQGEG…EDMNLFKTNH (130 aa). Positions 18–95 constitute a Cytochrome b5 heme-binding domain; it reads MPTFRWEEIQ…LKPLLIGELA (78 aa). A helical transmembrane segment spans residues 131-151; sequence LFFFLLLSHIIVMESIAWFIL. Over 152-157 the chain is Lumenal; sequence SYFGNG. A helical transmembrane segment spans residues 158–178; that stretch reads WIPTVITAFVLATSQAQAGWL. The Cytoplasmic segment spans residues 179-264; the sequence is QHDYGHLSVY…KYLPYNHQHE (86 aa). A Histidine box-1 motif is present at residues 180-184; that stretch reads HDYGH. The Histidine box-2 motif lies at 217 to 221; that stretch reads HFQHH. Residues 265–285 traverse the membrane as a helical segment; that stretch reads YFFLIGPPLLIPMYFQYQIIM. At 286 to 305 the chain is on the lumenal side; sequence TMIRRRDWVDLAWAISYYAR. A helical transmembrane segment spans residues 306–326; it reads FFYTYIPFYGILGALVFLNFI. Residues 327–444 are Cytoplasmic-facing; sequence RFLESHWFVW…ELWLDAYLHK (118 aa). The Histidine box-3 signature appears at 382 to 386; that stretch reads QIEHH.

It belongs to the fatty acid desaturase type 1 family. As to expression, expressed in the liver and brain (at protein level). Highest activity is found in the liver and adrenals followed by the testes and other organs, absent in adipose tissue.

It localises to the endoplasmic reticulum membrane. The protein localises to the microsome membrane. It catalyses the reaction (9Z,12Z)-octadecadienoyl-CoA + 2 Fe(II)-[cytochrome b5] + O2 + 2 H(+) = (6Z,9Z,12Z)-octadecatrienoyl-CoA + 2 Fe(III)-[cytochrome b5] + 2 H2O. The catalysed reaction is (9Z,12Z,15Z)-octadecatrienoyl-CoA + 2 Fe(II)-[cytochrome b5] + O2 + 2 H(+) = (6Z,9Z,12Z,15Z)-octadecatetraenoyl-CoA + 2 Fe(III)-[cytochrome b5] + 2 H2O. The enzyme catalyses (9Z,12Z,15Z,18Z,21Z)-tetracosapentaenoyl-CoA + 2 Fe(II)-[cytochrome b5] + O2 + 2 H(+) = (6Z,9Z,12Z,15Z,18Z,21Z)-tetracosahexaenoyl-CoA + 2 Fe(III)-[cytochrome b5] + 2 H2O. It carries out the reaction (11E)-octadecenoyl-CoA + 2 Fe(II)-[cytochrome b5] + O2 + 2 H(+) = (6Z,11E)-octadecadienoyl-CoA + 2 Fe(III)-[cytochrome b5] + 2 H2O. It catalyses the reaction (11Z,14Z)-eicosadienoyl-CoA + 2 Fe(II)-[cytochrome b5] + O2 + 2 H(+) = (8Z,11Z,14Z)-eicosatrienoyl-CoA + 2 Fe(III)-[cytochrome b5] + 2 H2O. The catalysed reaction is (11Z,14Z,17Z)-eicosatrienoyl-CoA + 2 Fe(II)-[cytochrome b5] + O2 + 2 H(+) = (8Z,11Z,14Z,17Z)-eicosatetraenoyl-CoA + 2 Fe(III)-[cytochrome b5] + 2 H2O. It participates in lipid metabolism; polyunsaturated fatty acid biosynthesis. Functionally, involved in the biosynthesis of highly unsaturated fatty acids (HUFA) from the essential polyunsaturated fatty acids (PUFA) linoleic acid (LA) (18:2n-6) and alpha-linolenic acid (ALA) (18:3n-3) precursors, acting as a fatty acyl-coenzyme A (CoA) desaturase that introduces a cis double bond at carbon 6 of the fatty acyl chain. Catalyzes the first and rate limiting step in this pathway which is the desaturation of LA (18:2n-6) and ALA (18:3n-3) into gamma-linoleate (GLA) (18:3n-6) and stearidonate (18:4n-3), respectively. Subsequently, in the biosynthetic pathway of HUFA n-3 series, it desaturates tetracosapentaenoate (24:5n-3) to tetracosahexaenoate (24:6n-3), which is then converted to docosahexaenoate (DHA)(22:6n-3), an important lipid for nervous system function. It can also desaturate (11E)-octadecenoate (trans-vaccenoate) at carbon 6 generating (6Z,11E)-octadecadienoate. In addition to Delta-6 activity, this enzyme exhibits Delta-8 activity with slight biases toward n-3 fatty acyl-CoA substrates. This chain is Acyl-CoA 6-desaturase (Fads2), found in Rattus norvegicus (Rat).